The sequence spans 242 residues: NAD(P)H-hydrate epimerase (242 aa).

The 211-residue stretch at 11–221 folds into the YjeF N-terminal domain; that stretch reads AKALDAELMS…KVITKKFNLS (211 aa). 61–65 is a (6S)-NADPHX binding site; the sequence is NNGGD. Asparagine 62 and aspartate 128 together coordinate K(+). (6S)-NADPHX contacts are provided by residues 132-138 and aspartate 161; that span reads GFSFKGP. Residue serine 164 participates in K(+) binding.

It belongs to the NnrE/AIBP family. Requires K(+) as cofactor.

It is found in the cytoplasm. The protein resides in the mitochondrion. The protein localises to the nucleus. The catalysed reaction is (6R)-NADHX = (6S)-NADHX. The enzyme catalyses (6R)-NADPHX = (6S)-NADPHX. Catalyzes the epimerization of the S- and R-forms of NAD(P)HX, a damaged form of NAD(P)H that is a result of enzymatic or heat-dependent hydration. This is a prerequisite for the S-specific NAD(P)H-hydrate dehydratase to allow the repair of both epimers of NAD(P)HX. May have a role in meiosis. This chain is NAD(P)H-hydrate epimerase (mug182), found in Schizosaccharomyces pombe (strain 972 / ATCC 24843) (Fission yeast).